The primary structure comprises 507 residues: Transcription factor NIGTH1 (507 aa).

Disordered stretches follow at residues 139–172 and 238–268; these read ASAA…TALD and SREA…RKAR. Positions 152-161 are enriched in basic and acidic residues; sequence PKEHSEHHPL. The region spanning 263 to 323 is the HTH myb-type domain; that stretch reads PHRKARRCWS…HLQKYRLHTR (61 aa). A DNA-binding region (H-T-H motif) is located at residues 294–319; sequence PKQIRELMKVDGLTNDEVKSHLQKYR. Residues 402-507 are disordered; that stretch reads AVAPPPPLPP…TTTSAGAINY (106 aa). The segment covering 412–433 has biased composition (low complexity); it reads QQQLAPPYSAKSSASARLGSPD. Residues 437-446 show a composition bias toward gly residues; it reads RGSGGGGGAA. Acidic residues predominate over residues 456–476; it reads ESIEEEGEGEEREDDDDDDEM.

Interacts with ACA5.

The protein localises to the nucleus. Probable transcription factor that may play a role in regulatory networks controlling development and metabolism. The protein is Transcription factor NIGTH1 of Oryza sativa subsp. japonica (Rice).